Reading from the N-terminus, the 102-residue chain is Large ribosomal subunit protein bL21 (102 aa).

The protein belongs to the bacterial ribosomal protein bL21 family. As to quaternary structure, part of the 50S ribosomal subunit. Contacts protein L20.

Its function is as follows. This protein binds to 23S rRNA in the presence of protein L20. This Leifsonia xyli subsp. xyli (strain CTCB07) protein is Large ribosomal subunit protein bL21.